The primary structure comprises 253 residues: Type III pantothenate kinase (253 aa).

6-13 serves as a coordination point for ATP; sequence DVGNTNTV. 103–106 is a substrate binding site; the sequence is GADR. Aspartate 105 (proton acceptor) is an active-site residue. Aspartate 125 is a K(+) binding site. Threonine 128 contacts ATP. Threonine 180 lines the substrate pocket.

The protein belongs to the type III pantothenate kinase family. In terms of assembly, homodimer. NH4(+) is required as a cofactor. Requires K(+) as cofactor.

It is found in the cytoplasm. It carries out the reaction (R)-pantothenate + ATP = (R)-4'-phosphopantothenate + ADP + H(+). The protein operates within cofactor biosynthesis; coenzyme A biosynthesis; CoA from (R)-pantothenate: step 1/5. Functionally, catalyzes the phosphorylation of pantothenate (Pan), the first step in CoA biosynthesis. The sequence is that of Type III pantothenate kinase from Parafrankia sp. (strain EAN1pec).